The primary structure comprises 539 residues: CTP synthase (539 aa).

An amidoligase domain region spans residues M1–I267. Residue S13 coordinates CTP. Residue S13 coordinates UTP. An ATP-binding site is contributed by S14–I19. Y54 contributes to the L-glutamine binding site. D71 contacts ATP. Positions 71 and 141 each coordinate Mg(2+). Residues D148 to E150, K188 to Q193, and K224 contribute to the CTP site. UTP contacts are provided by residues K188 to Q193 and K224. Positions K294–D537 constitute a Glutamine amidotransferase type-1 domain. G356 contacts L-glutamine. The active-site Nucleophile; for glutamine hydrolysis is C383. L-glutamine contacts are provided by residues L384–Q387, E407, and R465. Catalysis depends on residues H510 and E512.

This sequence belongs to the CTP synthase family. As to quaternary structure, homotetramer.

It carries out the reaction UTP + L-glutamine + ATP + H2O = CTP + L-glutamate + ADP + phosphate + 2 H(+). The catalysed reaction is L-glutamine + H2O = L-glutamate + NH4(+). The enzyme catalyses UTP + NH4(+) + ATP = CTP + ADP + phosphate + 2 H(+). The protein operates within pyrimidine metabolism; CTP biosynthesis via de novo pathway; CTP from UDP: step 2/2. Allosterically activated by GTP, when glutamine is the substrate; GTP has no effect on the reaction when ammonia is the substrate. The allosteric effector GTP functions by stabilizing the protein conformation that binds the tetrahedral intermediate(s) formed during glutamine hydrolysis. Inhibited by the product CTP, via allosteric rather than competitive inhibition. Its function is as follows. Catalyzes the ATP-dependent amination of UTP to CTP with either L-glutamine or ammonia as the source of nitrogen. Regulates intracellular CTP levels through interactions with the four ribonucleotide triphosphates. The protein is CTP synthase of Lactobacillus delbrueckii subsp. bulgaricus (strain ATCC 11842 / DSM 20081 / BCRC 10696 / JCM 1002 / NBRC 13953 / NCIMB 11778 / NCTC 12712 / WDCM 00102 / Lb 14).